The sequence spans 120 residues: Flagellar protein FliT (120 aa).

The interval 1–50 (MTNFIPSLTDWHALHALSITMLDLAHSGKWDELIEQEMNYVQLVEGIARN) is required for homodimerization. The segment at 59 to 97 (LINQAKEILNAVLRNEAELKTLLQHRMEELRQLIDQTGK) is fliD binding.

This sequence belongs to the FliT family. In terms of assembly, homodimer. Interacts with FliD and FlhC.

It is found in the cytoplasm. The protein resides in the cytosol. Functionally, dual-function protein that regulates the transcription of class 2 flagellar operons and that also acts as an export chaperone for the filament-capping protein FliD. As a transcriptional regulator, acts as an anti-FlhDC factor; it directly binds FlhC, thus inhibiting the binding of the FlhC/FlhD complex to class 2 promoters, resulting in decreased expression of class 2 flagellar operons. As a chaperone, effects FliD transition to the membrane by preventing its premature polymerization, and by directing it to the export apparatus. The chain is Flagellar protein FliT from Citrobacter koseri (strain ATCC BAA-895 / CDC 4225-83 / SGSC4696).